We begin with the raw amino-acid sequence, 473 residues long: MQVTEINAQGLKREFQVLLAAQELEERLTNELSGMKDKVQLKGFRPGKVPVAHLRKVYGRSVMAEVVQNAVNEANRQIVTDNGLKLALEPQVEFPTDQAEVEKALDAKGDLAFKVALEVMPSFELADLSDVSLTKLVAKPSDAEVDEALDRMAGQSRPFTEREEGAEAQSGDRVTIDFVGRIDGEEFQGGKGEGIDLELGSGSFIPGFEDQLVGAKVGDKRLVKVTFPESYGAEHLAGKDAEFDVTVTKIQAAGEAKIDDEFAKSMGMESLEKLREAVSEAIGRDFEAASRRRLKKELLDALDGKYAFELPPSLVAQEFAAVWAQVEQDLKTRGKTFEDEDTTEEKAQAEYRKIAERRVRLGLVLAQVGESADIKVSDEEVNQALIARVRQFPGQEQQVWDFYRKNAQALAELRAPLFEEKVVDHVLGQVKLVEEPVSKEALFADEDGDDTTGGKPADKAEAKDESKTEAKAD.

The 86-residue stretch at 171–256 (GDRVTIDFVG…VTKIQAAGEA (86 aa)) folds into the PPIase FKBP-type domain. Residues 439–473 (KEALFADEDGDDTTGGKPADKAEAKDESKTEAKAD) are disordered. Over residues 456–473 (PADKAEAKDESKTEAKAD) the composition is skewed to basic and acidic residues.

The protein belongs to the FKBP-type PPIase family. Tig subfamily.

The protein resides in the cytoplasm. The catalysed reaction is [protein]-peptidylproline (omega=180) = [protein]-peptidylproline (omega=0). Functionally, involved in protein export. Acts as a chaperone by maintaining the newly synthesized protein in an open conformation. Functions as a peptidyl-prolyl cis-trans isomerase. This chain is Trigger factor, found in Methylobacterium radiotolerans (strain ATCC 27329 / DSM 1819 / JCM 2831 / NBRC 15690 / NCIMB 10815 / 0-1).